The primary structure comprises 345 residues: Membrane progestin receptor gamma-A (345 aa).

Residues 1–52 lie on the Cytoplasmic side of the membrane; it reads MLNLIKLPQVFTINQVPKVFHEDGIISGYRHPCSSAKDCVLSLFQLTNETLN. A helical membrane pass occupies residues 53–73; the sequence is IWTHFLPTWFFLWKLLTVVLV. The Extracellular segment spans residues 74–80; that stretch reads LEDWRDP. The helical transmembrane segment at 81 to 101 threads the bilayer; that stretch reads FIWPFLVFLLSCCVYPLASSC. Topologically, residues 102–114 are cytoplasmic; that stretch reads AHTFSTMSERARH. A helical membrane pass occupies residues 115–135; it reads ICFFFDYGALSFYSLGSAIIY. The Extracellular segment spans residues 136-148; that stretch reads SSYSFPDKWVNGT. The chain crosses the membrane as a helical span at residues 149 to 169; sequence FHLNYVSIAVVNSIISTALAC. The Cytoplasmic portion of the chain corresponds to 170-201; the sequence is YSRLGLPFLEYNCHSIKRPSGKLDQKLCKCLR. Residues 202 to 222 traverse the membrane as a helical segment; sequence IIAFVYPYLFDNIPLFYRIFV. At 223–272 the chain is on the extracellular side; it reads CAGEGCTVNEANTVHYQHTSLAFFTGFLFATHLPERLAPGSFDYIGHSHQ. A helical membrane pass occupies residues 273–293; sequence LFHVFAIIGTYFQMTAIELDM. At 294–314 the chain is on the cytoplasmic side; it reads AARKQWLHAHLPPVTFLNTVG. Residues 315-335 traverse the membrane as a helical segment; the sequence is AAFFSVVSGLCIVYVFSLSLF. Over 336–345 the chain is Extracellular; the sequence is STRGVKNKSF.

The protein belongs to the ADIPOR family.

It localises to the membrane. Functionally, steroid membrane receptor. Binds progesterone. May be involved in oocyte maturation. The polypeptide is Membrane progestin receptor gamma-A (paqr5a) (Danio rerio (Zebrafish)).